The following is a 462-amino-acid chain: F-box/LRR-repeat protein At5g38396 (462 aa).

Positions M1–D47 constitute an F-box domain. LRR repeat units lie at residues S118 to R146, C148 to Y175, V197 to S222, C302 to S333, and A334 to G359.

This chain is F-box/LRR-repeat protein At5g38396, found in Arabidopsis thaliana (Mouse-ear cress).